Here is a 437-residue protein sequence, read N- to C-terminus: Palmitoyltransferase PFA4 (437 aa).

Over 1–12 (MAGLNDVPFIKG) the chain is Cytoplasmic. The chain crosses the membrane as a helical span at residues 13-33 (LAVPSVCALIIFLGYASQFLF). Over 34–48 (NYSTTLEPGPPTRRE) the chain is Lumenal. The helical transmembrane segment at 49–69 (TIIFNGLLLVLWITYYRTVAT) threads the bilayer. Residues 70–130 (DPGRYIFKDR…RNCVSMTTFP (61 aa)) are Cytoplasmic-facing. One can recognise a DHHC domain in the interval 87-137 (RWCNKCAAPKPPRAHHCRHCARCVPRMDHHCPWTRNCVSMTTFPHFLRFLI). The active-site S-palmitoyl cysteine intermediate is the Cys117. The helical transmembrane segment at 131–151 (HFLRFLIYTNMSLWMLGYFLW) threads the bilayer. Residues 152–173 (QRFSKIWEHRRLPAYLGPSFYG) are Lumenal-facing. Residues 174-194 (LICLSLISIVNFVTTVALGIM) traverse the membrane as a helical segment. Residues 195–437 (LINTVKSWVF…KILKKDGLDD (243 aa)) lie on the Cytoplasmic side of the membrane. Positions 377 to 419 (LDQGLGWVNSDGDRLRDYGVDEEASEPEGVNDDDDDDDDDDVP) are disordered. The span at 396–419 (VDEEASEPEGVNDDDDDDDDDDVP) shows a compositional bias: acidic residues.

It belongs to the DHHC palmitoyltransferase family. PFA4 subfamily.

The protein localises to the endoplasmic reticulum membrane. The enzyme catalyses L-cysteinyl-[protein] + hexadecanoyl-CoA = S-hexadecanoyl-L-cysteinyl-[protein] + CoA. Functionally, mediates the reversible addition of palmitate to target proteins, thereby regulating their membrane association and biological function. This Gibberella zeae (strain ATCC MYA-4620 / CBS 123657 / FGSC 9075 / NRRL 31084 / PH-1) (Wheat head blight fungus) protein is Palmitoyltransferase PFA4.